Reading from the N-terminus, the 377-residue chain is Probable trehalose-phosphate phosphatase G (377 aa).

Residues 1–20 form a disordered region; it reads MDLNINKTTPVLSDPTTPVS.

This sequence belongs to the trehalose phosphatase family. Requires a divalent metal cation as cofactor.

It carries out the reaction alpha,alpha-trehalose 6-phosphate + H2O = alpha,alpha-trehalose + phosphate. Its pathway is glycan biosynthesis; trehalose biosynthesis. Removes the phosphate from trehalose 6-phosphate to produce free trehalose. Trehalose accumulation in plant may improve abiotic stress tolerance. The chain is Probable trehalose-phosphate phosphatase G (TPPG) from Arabidopsis thaliana (Mouse-ear cress).